The sequence spans 94 residues: Co-chaperonin GroES (94 aa).

It belongs to the GroES chaperonin family. As to quaternary structure, heptamer of 7 subunits arranged in a ring. Interacts with the chaperonin GroEL.

It localises to the cytoplasm. Functionally, together with the chaperonin GroEL, plays an essential role in assisting protein folding. The GroEL-GroES system forms a nano-cage that allows encapsulation of the non-native substrate proteins and provides a physical environment optimized to promote and accelerate protein folding. GroES binds to the apical surface of the GroEL ring, thereby capping the opening of the GroEL channel. This Clostridium novyi (strain NT) protein is Co-chaperonin GroES.